Here is a 58-residue protein sequence, read N- to C-terminus: MVNLLQIVRDHWVHVLVPMGFVIGCYLDKKSDEQLTAFRNKSMLFKRELQPNEEVTWK.

Residues 11-27 (HWVHVLVPMGFVIGCYL) form a helical membrane-spanning segment.

Belongs to the complex I NDUFB1 subunit family. As to quaternary structure, complex I is composed of 45 different subunits.

Its subcellular location is the mitochondrion inner membrane. Functionally, accessory subunit of the mitochondrial membrane respiratory chain NADH dehydrogenase (Complex I) that is believed not to be involved in catalysis. Complex I functions in the transfer of electrons from NADH to the respiratory chain. The immediate electron acceptor for the enzyme is believed to be ubiquinone. The polypeptide is NADH dehydrogenase [ubiquinone] 1 beta subcomplex subunit 1 (NDUFB1) (Pongo pygmaeus (Bornean orangutan)).